The following is a 185-amino-acid chain: Threonylcarbamoyl-AMP synthase (185 aa).

Residues 3-185 form the YrdC-like domain; it reads EQAPAEVKQV…IDAISGKILR (183 aa).

Belongs to the SUA5 family. TsaC subfamily.

It is found in the cytoplasm. The catalysed reaction is L-threonine + hydrogencarbonate + ATP = L-threonylcarbamoyladenylate + diphosphate + H2O. Functionally, required for the formation of a threonylcarbamoyl group on adenosine at position 37 (t(6)A37) in tRNAs that read codons beginning with adenine. Catalyzes the conversion of L-threonine, HCO(3)(-)/CO(2) and ATP to give threonylcarbamoyl-AMP (TC-AMP) as the acyladenylate intermediate, with the release of diphosphate. This chain is Threonylcarbamoyl-AMP synthase, found in Shewanella woodyi (strain ATCC 51908 / MS32).